The following is a 440-amino-acid chain: D-serine dehydratase (440 aa).

Lys-116 is subject to N6-(pyridoxal phosphate)lysine.

Belongs to the serine/threonine dehydratase family. DsdA subfamily. In terms of assembly, monomer. Requires pyridoxal 5'-phosphate as cofactor.

It catalyses the reaction D-serine = pyruvate + NH4(+). The protein is D-serine dehydratase of Salmonella typhi.